The primary structure comprises 138 residues: ATP synthase epsilon chain (138 aa).

The protein belongs to the ATPase epsilon chain family. F-type ATPases have 2 components, CF(1) - the catalytic core - and CF(0) - the membrane proton channel. CF(1) has five subunits: alpha(3), beta(3), gamma(1), delta(1), epsilon(1). CF(0) has three main subunits: a, b and c.

The protein localises to the cell inner membrane. Functionally, produces ATP from ADP in the presence of a proton gradient across the membrane. This chain is ATP synthase epsilon chain, found in Citrifermentans bemidjiense (strain ATCC BAA-1014 / DSM 16622 / JCM 12645 / Bem) (Geobacter bemidjiensis).